The sequence spans 428 residues: ATP phosphoribosyltransferase regulatory subunit (428 aa).

Belongs to the class-II aminoacyl-tRNA synthetase family. HisZ subfamily. Heteromultimer composed of HisG and HisZ subunits.

The protein localises to the cytoplasm. It participates in amino-acid biosynthesis; L-histidine biosynthesis; L-histidine from 5-phospho-alpha-D-ribose 1-diphosphate: step 1/9. In terms of biological role, required for the first step of histidine biosynthesis. May allow the feedback regulation of ATP phosphoribosyltransferase activity by histidine. The protein is ATP phosphoribosyltransferase regulatory subunit of Syntrophotalea carbinolica (strain DSM 2380 / NBRC 103641 / GraBd1) (Pelobacter carbinolicus).